We begin with the raw amino-acid sequence, 1633 residues long: Serine-aspartate repeat-containing protein F (1633 aa).

The first 45 residues, 1–45 (MKKRRQGPINKRVDFLSNKVNKYSIRKFTVGTASILVGATLMFGA), serve as a signal peptide directing secretion. The interval 46-678 (ADNEAKAAED…GSSTAQGDNP (633 aa)) is ligand binding A region. The interval 51-269 (KAAEDNQLES…SISTDSSVND (219 aa)) is disordered. Basic and acidic residues predominate over residues 61–74 (ASKEEQKGSRDNES). 2 stretches are compositionally biased toward polar residues: residues 85–99 (GSHSSEKTTNVNNAT) and 146–168 (PKTSTTQQDSTEKNNPSLKDNLN). Positions 175–184 (KESKTDEHST) are enriched in basic and acidic residues. Polar residues predominate over residues 186–226 (QAQMSTNKSNLDTNDSPTQSEKTSSQANNDSTDNQSAPSKQ). Over residues 227–253 (LDSKPSEQKVYKTKFNDEPTQDVEHTT) the composition is skewed to basic and acidic residues. Polar residues predominate over residues 255–266 (KLKTPSISTDSS). CNA-B domains lie at 679–797 (TYSL…YLTP), 798–907 (KYNV…FYKP), 908–1018 (IYNL…YKTP), and 1019–1129 (KYSV…FDDD). The interval 679–1129 (TYSLGDYVWL…SIDNGYFDDD (451 aa)) is type I collagen binding region. Residues 862-889 (FETPEGYTPTKQNSGSDEGKDSNGTKTT) form a disordered region. The segment at 1085–1608 (KPEGMTQTTA…ANEDHDSKGT (524 aa)) is disordered. The segment covering 1107-1119 (EDVRVTITDHDDF) has biased composition (basic and acidic residues). A compositionally biased stretch (acidic residues) spans 1125-1584 (YFDDDSDSDS…DSDSDSDSDS (460 aa)). Residues 1585–1606 (DSDKNAKDKLPDTGANEDHDSK) show a composition bias toward basic and acidic residues. The LPXTG sorting signal motif lies at 1594 to 1598 (LPDTG). Thr1597 is modified (pentaglycyl murein peptidoglycan amidated threonine). Positions 1598–1633 (GANEDHDSKGTLLGTLFAGLGALLLGRRRKKDNKEK) are cleaved as a propeptide — removed by sortase.

The protein belongs to the serine-aspartate repeat-containing protein (SDr) family.

The protein resides in the secreted. It localises to the cell wall. Binds to type I collagen via alpha-2(I) or alpha-1(I) chains. This Staphylococcus epidermidis (strain ATCC 12228 / FDA PCI 1200) protein is Serine-aspartate repeat-containing protein F (sdrF).